The chain runs to 380 residues: Capsular polysaccharide biosynthesis glycosyltransferase CapM (380 aa).

Belongs to the glycosyltransferase group 1 family. Glycosyltransferase 4 subfamily.

It participates in capsule biogenesis; capsule polysaccharide biosynthesis. Its function is as follows. Required for the biosynthesis of type 1 capsular polysaccharide. The protein is Capsular polysaccharide biosynthesis glycosyltransferase CapM (capM) of Staphylococcus aureus.